Reading from the N-terminus, the 240-residue chain is Nuclear receptor-interacting protein 3 (240 aa).

This is Nuclear receptor-interacting protein 3 (Nrip3) from Mus musculus (Mouse).